The sequence spans 368 residues: Quinolinate synthase (368 aa).

The iminosuccinate site is built by H46 and S63. C110 lines the [4Fe-4S] cluster pocket. Residues 141–143 and S162 each bind iminosuccinate; that span reads YVN. C230 serves as a coordination point for [4Fe-4S] cluster. Iminosuccinate contacts are provided by residues 256–258 and T273; that span reads HPE. C320 serves as a coordination point for [4Fe-4S] cluster.

This sequence belongs to the quinolinate synthase family. Type 3 subfamily. The cofactor is [4Fe-4S] cluster.

It is found in the cytoplasm. The enzyme catalyses iminosuccinate + dihydroxyacetone phosphate = quinolinate + phosphate + 2 H2O + H(+). It participates in cofactor biosynthesis; NAD(+) biosynthesis; quinolinate from iminoaspartate: step 1/1. Its function is as follows. Catalyzes the condensation of iminoaspartate with dihydroxyacetone phosphate to form quinolinate. The sequence is that of Quinolinate synthase from Bacillus anthracis (strain A0248).